Reading from the N-terminus, the 300-residue chain is Tyrosine phosphatase-like protein J1 (300 aa).

Residues 27-294 enclose the Tyrosine-protein phosphatase domain; that stretch reads LKREHEHIMQ…IFCYFTVLQF (268 aa).

Belongs to the protein-tyrosine phosphatase family.

The chain is Tyrosine phosphatase-like protein J1 (J1) from Microplitis demolitor (Parasitoid wasp).